Reading from the N-terminus, the 258-residue chain is GTP cyclohydrolase FolE2 (258 aa).

It belongs to the GTP cyclohydrolase IV family.

The enzyme catalyses GTP + H2O = 7,8-dihydroneopterin 3'-triphosphate + formate + H(+). The protein operates within cofactor biosynthesis; 7,8-dihydroneopterin triphosphate biosynthesis; 7,8-dihydroneopterin triphosphate from GTP: step 1/1. In terms of biological role, converts GTP to 7,8-dihydroneopterin triphosphate. This Lawsonia intracellularis (strain PHE/MN1-00) protein is GTP cyclohydrolase FolE2.